Reading from the N-terminus, the 369-residue chain is Transmembrane protein 144 homolog A (369 aa).

Helical transmembrane passes span Val-6 to Val-26, Leu-35 to Ile-55, Pro-63 to Ile-83, Leu-85 to Phe-105, Asp-122 to Ile-142, Val-221 to Met-241, Ile-256 to Ala-276, Thr-288 to Ile-308, Gly-318 to Phe-338, and Leu-347 to Ser-367.

The protein belongs to the TMEM144 family.

The protein resides in the membrane. The chain is Transmembrane protein 144 homolog A (tmem144A) from Dictyostelium discoideum (Social amoeba).